Here is a 213-residue protein sequence, read N- to C-terminus: Cytochrome c biogenesis ATP-binding export protein CcmA (213 aa).

The region spanning 7 to 213 (LKTKKLACQR…VRLENYKFTE (207 aa)) is the ABC transporter domain. An ATP-binding site is contributed by 39–46 (GHNGIGKT).

This sequence belongs to the ABC transporter superfamily. CcmA exporter (TC 3.A.1.107) family. The complex is composed of two ATP-binding proteins (CcmA) and two transmembrane proteins (CcmB).

The protein resides in the cell inner membrane. It carries out the reaction heme b(in) + ATP + H2O = heme b(out) + ADP + phosphate + H(+). Part of the ABC transporter complex CcmAB involved in the biogenesis of c-type cytochromes; once thought to export heme, this seems not to be the case, but its exact role is uncertain. Responsible for energy coupling to the transport system. The protein is Cytochrome c biogenesis ATP-binding export protein CcmA of Pasteurella multocida (strain Pm70).